We begin with the raw amino-acid sequence, 50 residues long: Small ribosomal subunit protein uS14 (50 aa).

Zn(2+)-binding residues include Cys-15, Cys-18, Cys-33, and Cys-36.

This sequence belongs to the universal ribosomal protein uS14 family. Zinc-binding uS14 subfamily. As to quaternary structure, part of the 30S ribosomal subunit. Zn(2+) is required as a cofactor.

Its function is as follows. Binds 16S rRNA, required for the assembly of 30S particles. The polypeptide is Small ribosomal subunit protein uS14 (Methanosarcina acetivorans (strain ATCC 35395 / DSM 2834 / JCM 12185 / C2A)).